A 205-amino-acid polypeptide reads, in one-letter code: Ribosomal RNA large subunit methyltransferase E (205 aa).

5 residues coordinate S-adenosyl-L-methionine: Gly60, Trp62, Asp80, Asp96, and Asp121. Catalysis depends on Lys161, which acts as the Proton acceptor.

This sequence belongs to the class I-like SAM-binding methyltransferase superfamily. RNA methyltransferase RlmE family.

The protein resides in the cytoplasm. It carries out the reaction uridine(2552) in 23S rRNA + S-adenosyl-L-methionine = 2'-O-methyluridine(2552) in 23S rRNA + S-adenosyl-L-homocysteine + H(+). In terms of biological role, specifically methylates the uridine in position 2552 of 23S rRNA at the 2'-O position of the ribose in the fully assembled 50S ribosomal subunit. This Azoarcus sp. (strain BH72) protein is Ribosomal RNA large subunit methyltransferase E.